The sequence spans 217 residues: Tegument protein BKRF4 (217 aa).

Residues 1-217 (MAMFLKSRGV…GNNNYNWPWL (217 aa)) are disordered. Positions 32–42 (YTLGSQASQSI) are enriched in polar residues. The span at 43 to 79 (QEEDVSDTDESDYSDEDEEIDLEEEYPSDEDPSEGSD) shows a compositional bias: acidic residues. Positions 63–64 (DL) are interaction with host histones H3/H4. Residues 81–84 (DPSW) form an interaction with host H2A/H2B region. Over residues 89–102 (SDESDYSESDEDEA) the composition is skewed to acidic residues. Positions 106 to 132 (SQASRSSRVSPSTQQSSGLTPTPSFSR) are enriched in low complexity. The segment covering 136–145 (RAPPRPPAPA) has biased composition (pro residues). The segment covering 208-217 (GNNNYNWPWL) has biased composition (polar residues).

It belongs to the lymphocryptovirus BKRF4 family. In terms of assembly, forms a complex with the host H3/H4 dimer and histone chaperone ASF1. Also forms a complex with host H2A/H2B dimer. Interacts (via C-terminus) with BGLF2; this interaction is important for infectious virion production.

Its subcellular location is the virion tegument. It localises to the host nucleus. It is found in the host cytoplasm. The protein resides in the host perinuclear region. Histone-binding protein that binds to histones H2A/H2B, H3/H4 and cellular chromatin to overcome the host DNA damage response triggered by the viral genome ends. Interferes with histone ubiquitination and recruitment of repair proteins. In Epstein-Barr virus (strain GD1) (HHV-4), this protein is Tegument protein BKRF4.